The chain runs to 98 residues: Small ribosomal subunit protein uS19 (98 aa).

The protein belongs to the universal ribosomal protein uS19 family.

Its function is as follows. Protein S19 forms a complex with S13 that binds strongly to the 16S ribosomal RNA. The chain is Small ribosomal subunit protein uS19 from Chlorobaculum parvum (strain DSM 263 / NCIMB 8327) (Chlorobium vibrioforme subsp. thiosulfatophilum).